The primary structure comprises 141 residues: uncharacterized protein (141 aa).

Residues arginine 4–lysine 139 form the HTH marR-type domain. A DNA-binding region (H-T-H motif) is located at residues valine 53–glutamate 76.

This is an uncharacterized protein from Bacillus subtilis (strain 168).